Consider the following 190-residue polypeptide: Putative manganese efflux pump MntP (190 aa).

6 helical membrane passes run 5 to 25, 41 to 61, 64 to 84, 105 to 125, 127 to 147, and 169 to 189; these read ALLA…VATG, WHFG…GQGI, FVDA…GLKM, TSLI…GVTL, MLGL…LGLT, and ILGG…SGVF.

The protein belongs to the MntP (TC 9.B.29) family.

Its subcellular location is the cell inner membrane. Its function is as follows. Probably functions as a manganese efflux pump. The polypeptide is Putative manganese efflux pump MntP (Oleidesulfovibrio alaskensis (strain ATCC BAA-1058 / DSM 17464 / G20) (Desulfovibrio alaskensis)).